The chain runs to 136 residues: Large ribosomal subunit protein uL16c (136 aa).

It belongs to the universal ribosomal protein uL16 family. In terms of assembly, part of the 50S ribosomal subunit.

The protein resides in the plastid. It is found in the chloroplast. This Mesostigma viride (Green alga) protein is Large ribosomal subunit protein uL16c.